The chain runs to 297 residues: Leucine-rich repeat-containing protein 25 (297 aa).

Positions 1–25 (MGSIRTRLLWLCLLMLLALLHKSGS) are cleaved as a signal peptide. At 26-169 (QDLTCMVHPS…SCPPSWGPGT (144 aa)) the chain is on the extracellular side. 2 N-linked (GlcNAc...) asparagine glycosylation sites follow: Asn-44 and Asn-49. LRR repeat units lie at residues 66-89 (HAQVLDLSKNGLQVLPGAFFDKLE) and 90-113 (KLQTLIVTHNQLDSVDRSLALRCD). 2 N-linked (GlcNAc...) asparagine glycosylation sites follow: Asn-133 and Asn-152. Residues 170-190 (IGALVAGTISLAVAVSGSVLA) form a helical membrane-spanning segment. The Cytoplasmic portion of the chain corresponds to 191–297 (WRLLRRRRRA…VYCNLESLGR (107 aa)). The tract at residues 202–244 (EHSLSKAQMSPHDIPKPVTDFLPRYSSRRPGPKAPDSPPSRFT) is disordered. Phosphoserine is present on residues Ser-211, Ser-238, and Ser-267. Position 289 is a phosphotyrosine (Tyr-289).

Interacts with RIGI. Interacts with SQSTM1. Interacts with p65/RELA; this interaction promotes the degradation of RELA through autophagy.

It localises to the membrane. Its subcellular location is the cytoplasm. In terms of biological role, plays a role in the inhibition of RLR-mediated type I interferon signaling pathway by targeting RIGI for autophagic degradation. Interacts specifically with ISG15-associated RIGI to promote interaction between RIGI and the autophagic cargo receptor p62/SQSTM1 to mediate RIGI degradation via selective autophagy. Plays also a role in the inhibition of NF-kappa-B signaling pathway and inflammatory response by promoting the degradation of p65/RELA. This is Leucine-rich repeat-containing protein 25 (Lrrc25) from Mus musculus (Mouse).